Here is a 280-residue protein sequence, read N- to C-terminus: uncharacterized protein (280 aa).

A run of 6 helical transmembrane segments spans residues 46-66 (LIFL…FVCT), 81-101 (IACS…FLIP), 114-134 (FFYL…SWVV), 137-157 (VWHF…IKLQ), 170-190 (ILFI…LLEL), and 225-245 (IVAC…ALIV). A disordered region spans residues 258–280 (ESGSIEKKNKSSPPPRTWQSNYQ).

The protein belongs to the TatC family.

It localises to the mitochondrion membrane. This is an uncharacterized protein from Arabidopsis thaliana (Mouse-ear cress).